The following is a 386-amino-acid chain: MEKIEDQFASLHIVRRSSEPKEPTYLLGIDTSKTVQADKGGLVAVLCSNGSIRIYDKETLHLLREFGGSPGLLSGVSFANSCDSVYSASTDGTVKCWDARGASEKPVQLFKGYPSCSFISFDVNCKDHVICAGAEKVDEDALLVFWDARFTSQDLSTRDPLGAYSETHSDDITQVRFHPSNPNLVVSGSTDGLVNVFDLSADKEEDALVATCNSVSSVSCIGWCGKDYKQIYCMTHDEGFCWWDLNHLDTDEPITCLNIQDVREITDVKDGHLDYLIGGLYHEKMDRLFVIGGTNTGKIHLLSCTSAGLTHVTSLHGGHAATVRSFCWNVSEDSLLTGGEDAQLLLWKPGAMEKTFTKKDSLKIASSVQQRVRVHSSDSYKKRKQQ.

WD repeat units follow at residues 21–65 (KEPT…LLRE), 68–107 (GSPGLLSGVSFANSCDSVYSASTDGTVKCWDARGASEKPV), 112–156 (GYPS…QDLS), 167–207 (THSD…EEDA), 213–253 (NSVS…TDEP), and 318–357 (GHAATVRSFCWNVSEDSLLTGGEDAQLLLWKPGAMEKTFT).

The chain is WD repeat-containing protein 89 (Wdr89) from Mus musculus (Mouse).